The primary structure comprises 168 residues: Mitochondrial inner membrane protein Mpv17 (168 aa).

The next 4 membrane-spanning stretches (helical) occupy residues 12–29 (INVAAVMCLGDTISQFFF), 41–61 (RTLRFGIVGLVFVGPTLRRWY), 82–101 (MLVDQTLFAPPFTMAMSFLV), and 144–166 (LGYQVLYAQFIALVWNCYLSMIL).

It belongs to the peroxisomal membrane protein PXMP2/4 family. In terms of assembly, part of a larger complex that may be a homohexamer.

The protein localises to the mitochondrion inner membrane. Non-selective channel that modulates the membrane potential under normal conditions and oxidative stress, and is involved in mitochondrial homeostasis. Can translocate uridine, but not orotate, across a lipid membrane. Involved in maintenance of mitochondrial ultrastructure. May be involved in mitochondrial DNA (mtDNA) maintenance but does not appear to be directly involved in mitochondrial deoxynucleoside triphosphate (dNTP) pool homeostasis. May be involved in the regulation of reactive oxygen species metabolism and the control of oxidative phosphorylation. In Drosophila melanogaster (Fruit fly), this protein is Mitochondrial inner membrane protein Mpv17.